The primary structure comprises 516 residues: Maintenance of mitochondrial morphology protein 1 (516 aa).

Residues 1–43 (MAGSTSASLQTPYFPSSTQINPVRVDHTLPLPPAQPSLSFTQG) are Lumenal-facing. A helical membrane pass occupies residues 44 to 64 (LLVGQLSVVLLIGAFIKFFIF). Residues 65-516 (GEAPPPPSRG…GSMPDTVTET (452 aa)) lie on the Cytoplasmic side of the membrane. 4 disordered regions span residues 70-118 (PPSR…SSST), 295-349 (TSDQ…SKHG), 420-466 (RTGL…IDRG), and 485-516 (GGHQ…VTET). Composition is skewed to polar residues over residues 74-96 (GLSN…TDSS), 105-118 (STSN…SSST), and 295-312 (TSDQ…TTSE). The region spanning 151-412 (QPESLDWFNV…EPRVQVVGLP (262 aa)) is the SMP-LTD domain. The span at 449 to 460 (GVSGGGGGGGSM) shows a compositional bias: gly residues.

It belongs to the MMM1 family. As to quaternary structure, homodimer. Component of the ER-mitochondria encounter structure (ERMES) or MDM complex, composed of MMM1, MDM10, MDM12 and MDM34. An MMM1 homodimer associates with one molecule of MDM12 on each side in a pairwise head-to-tail manner, and the SMP-LTD domains of MMM1 and MDM12 generate a continuous hydrophobic tunnel for phospholipid trafficking.

The protein localises to the endoplasmic reticulum membrane. Component of the ERMES/MDM complex, which serves as a molecular tether to connect the endoplasmic reticulum (ER) and mitochondria. Components of this complex are involved in the control of mitochondrial shape and protein biogenesis, and function in nonvesicular lipid trafficking between the ER and mitochondria. The MDM12-MMM1 subcomplex functions in the major beta-barrel assembly pathway that is responsible for biogenesis of all outer membrane beta-barrel proteins, and acts in a late step after the SAM complex. The MDM10-MDM12-MMM1 subcomplex further acts in the TOM40-specific pathway after the action of the MDM12-MMM1 complex. Essential for establishing and maintaining the structure of mitochondria and maintenance of mtDNA nucleoids. The polypeptide is Maintenance of mitochondrial morphology protein 1 (Paracoccidioides brasiliensis (strain Pb18)).